A 269-amino-acid polypeptide reads, in one-letter code: MVKISFQPAVAGIKGDKADKASASASAPAPAPAAEILLTPAREERPPHHRYKKGSSVGGVCYLSMGMVVLLMGLVFASVYIYRYFFLAQLARDNFFHCGVLYEDSLSSQARTRMELEEDVKIYLEENYERINVPVPQFGGGDPADIIHDFQRGLTAYHDISLDKCYVIELNTTIVLPPRNFWELLMNVKRGTYLPQTYIIQEEMVVTEHVSDKEALGSFIYHLCNGKDTYRLRRRATRRRINKRGAKNCNAIRHFENTFVVETLICGVV.

Thr39 carries the post-translational modification Phosphothreonine. The chain crosses the membrane as a helical; Signal-anchor for type II membrane protein span at residues 57–77; the sequence is VGGVCYLSMGMVVLLMGLVFA. The 95-residue stretch at 138-232 folds into the BRICHOS domain; sequence FGGGDPADII…LCNGKDTYRL (95 aa). Cys165 and Cys224 are oxidised to a cystine. Asn171 carries an N-linked (GlcNAc...) asparagine glycan.

The protein belongs to the ITM2 family. Interacts with BACE1. Interacts with APP. Interacts with STMN2. Type I membrane-bound, as well as soluble, furin has a pre-eminent role in ITM2C proteolytic processing. PCSK7 and PCSK5 may also be involved although to a lesser extent. The soluble form of PCSK7 is incapable of processing ITM2C. Fails to undergo shedding by ADAM10 and intramembrane cleavage by SPPL2B.

It localises to the lysosome membrane. The protein localises to the cell membrane. Functionally, negative regulator of amyloid-beta peptide production. May inhibit the processing of APP by blocking its access to alpha- and beta-secretase. Binding to the beta-secretase-cleaved APP C-terminal fragment is negligible, suggesting that ITM2C is a poor gamma-secretase cleavage inhibitor. May play a role in TNF-induced cell death and neuronal differentiation. The protein is Integral membrane protein 2C (ITM2C) of Sus scrofa (Pig).